Consider the following 278-residue polypeptide: Shikimate dehydrogenase (NADP(+)) (278 aa).

Shikimate-binding positions include 18 to 20 (SRS) and Thr-65. Catalysis depends on Lys-69, which acts as the Proton acceptor. NADP(+) is bound at residue Glu-80. Shikimate is bound by residues Asn-89 and Asp-104. NADP(+) is bound by residues 129–133 (GAGGS) and Leu-218. Tyr-220 lines the shikimate pocket. Gly-241 is an NADP(+) binding site.

It belongs to the shikimate dehydrogenase family. As to quaternary structure, homodimer.

The catalysed reaction is shikimate + NADP(+) = 3-dehydroshikimate + NADPH + H(+). It functions in the pathway metabolic intermediate biosynthesis; chorismate biosynthesis; chorismate from D-erythrose 4-phosphate and phosphoenolpyruvate: step 4/7. Functionally, involved in the biosynthesis of the chorismate, which leads to the biosynthesis of aromatic amino acids. Catalyzes the reversible NADPH linked reduction of 3-dehydroshikimate (DHSA) to yield shikimate (SA). The protein is Shikimate dehydrogenase (NADP(+)) of Rhodopseudomonas palustris (strain ATCC BAA-98 / CGA009).